Here is a 304-residue protein sequence, read N- to C-terminus: D-alanine--D-alanine ligase (304 aa).

The 197-residue stretch at 103–299 (KLIWQALGLP…FADLCIEILK (197 aa)) folds into the ATP-grasp domain. 129–184 (EEKLGLPMFVKPAAEGSSVGVVKVKGKGRLKSVYEELKHLQGEIIAERFIGGGEYS) lines the ATP pocket. Mg(2+) is bound by residues D253, E266, and N268.

It belongs to the D-alanine--D-alanine ligase family. Mg(2+) is required as a cofactor. It depends on Mn(2+) as a cofactor.

The protein localises to the cytoplasm. The enzyme catalyses 2 D-alanine + ATP = D-alanyl-D-alanine + ADP + phosphate + H(+). It functions in the pathway cell wall biogenesis; peptidoglycan biosynthesis. Cell wall formation. The protein is D-alanine--D-alanine ligase of Neisseria meningitidis serogroup B (strain ATCC BAA-335 / MC58).